A 141-amino-acid chain; its full sequence is Metallothiol transferase FosB (141 aa).

The VOC domain occupies 5 to 120 (SINHLLFSVS…DGHKFEFHTG (116 aa)). Mg(2+) is bound by residues H8, H67, and E116. E116 acts as the Proton donor/acceptor in catalysis.

This sequence belongs to the fosfomycin resistance protein family. FosB subfamily. Homodimer. It depends on Mg(2+) as a cofactor.

The protein resides in the cytoplasm. Metallothiol transferase which confers resistance to fosfomycin by catalyzing the addition of a thiol cofactor to fosfomycin. L-cysteine is probably the physiological thiol donor. The polypeptide is Metallothiol transferase FosB (Lysinibacillus sphaericus (strain C3-41)).